The following is a 576-amino-acid chain: V-type ATP synthase alpha chain (576 aa).

238–245 provides a ligand contact to ATP; that stretch reads GPFGAGKT.

Belongs to the ATPase alpha/beta chains family.

The catalysed reaction is ATP + H2O + 4 H(+)(in) = ADP + phosphate + 5 H(+)(out). Its function is as follows. Produces ATP from ADP in the presence of a proton gradient across the membrane. The V-type alpha chain is a catalytic subunit. The protein is V-type ATP synthase alpha chain of Borrelia recurrentis (strain A1).